The sequence spans 218 residues: Cytidylate kinase (218 aa).

10–18 (GPAAAGKST) serves as a coordination point for ATP.

This sequence belongs to the cytidylate kinase family. Type 1 subfamily.

Its subcellular location is the cytoplasm. It catalyses the reaction CMP + ATP = CDP + ADP. It carries out the reaction dCMP + ATP = dCDP + ADP. The chain is Cytidylate kinase from Staphylococcus haemolyticus (strain JCSC1435).